The following is a 350-amino-acid chain: tRNA uridine(34) hydroxylase (350 aa).

Residues 146–240 (DDPDALFIDM…YARKAREQGL (95 aa)) form the Rhodanese domain. Residue Cys200 is the Cysteine persulfide intermediate of the active site.

Belongs to the TrhO family.

The catalysed reaction is uridine(34) in tRNA + AH2 + O2 = 5-hydroxyuridine(34) in tRNA + A + H2O. In terms of biological role, catalyzes oxygen-dependent 5-hydroxyuridine (ho5U) modification at position 34 in tRNAs, the first step in 5-carboxymethoxyuridine (cmo5U) biosynthesis. May be part of an alternate pathway, which is able to bypass cmo5U biogenesis in a subset of tRNAs under aerobic conditions. This chain is tRNA uridine(34) hydroxylase, found in Escherichia coli O45:K1 (strain S88 / ExPEC).